A 105-amino-acid polypeptide reads, in one-letter code: Small ribosomal subunit protein uS10 (105 aa).

This sequence belongs to the universal ribosomal protein uS10 family. As to quaternary structure, part of the 30S ribosomal subunit.

In terms of biological role, involved in the binding of tRNA to the ribosomes. The chain is Small ribosomal subunit protein uS10 from Lawsonia intracellularis (strain PHE/MN1-00).